The sequence spans 622 residues: UvrABC system protein C (622 aa).

Positions 13–92 (DKPGVYLMKN…IKKYRPRYNI (80 aa)) constitute a GIY-YIG domain. Residues 204–239 (KDIIRKLKEDMDTLSENMEFEKAAELRDKIFALEKI) enclose the UVR domain.

It belongs to the UvrC family. Interacts with UvrB in an incision complex.

The protein resides in the cytoplasm. The UvrABC repair system catalyzes the recognition and processing of DNA lesions. UvrC both incises the 5' and 3' sides of the lesion. The N-terminal half is responsible for the 3' incision and the C-terminal half is responsible for the 5' incision. The polypeptide is UvrABC system protein C (Clostridium kluyveri (strain ATCC 8527 / DSM 555 / NBRC 12016 / NCIMB 10680 / K1)).